We begin with the raw amino-acid sequence, 428 residues long: Elongation factor 1-alpha (428 aa).

The 213-residue stretch at 5–217 (KPHVNIVFIG…DQIPEPEKPV (213 aa)) folds into the tr-type G domain. The interval 14–21 (GHVDHGKS) is G1. Residue 14–21 (GHVDHGKS) coordinates GTP. Position 21 (serine 21) interacts with Mg(2+). Residues 68 to 72 (GITID) are G2. The interval 89 to 92 (DAPG) is G3. Residues 89–93 (DAPGH) and 144–147 (NKMD) each bind GTP. A G4 region spans residues 144-147 (NKMD). A G5 region spans residues 181 to 183 (SAW).

The protein belongs to the TRAFAC class translation factor GTPase superfamily. Classic translation factor GTPase family. EF-Tu/EF-1A subfamily.

It is found in the cytoplasm. It carries out the reaction GTP + H2O = GDP + phosphate + H(+). GTP hydrolase that promotes the GTP-dependent binding of aminoacyl-tRNA to the A-site of ribosomes during protein biosynthesis. The polypeptide is Elongation factor 1-alpha (Pyrococcus abyssi (strain GE5 / Orsay)).